A 253-amino-acid polypeptide reads, in one-letter code: 5'-nucleotidase SurE (253 aa).

4 residues coordinate a divalent metal cation: aspartate 8, aspartate 9, serine 40, and asparagine 97.

This sequence belongs to the SurE nucleotidase family. It depends on a divalent metal cation as a cofactor.

The protein resides in the cytoplasm. It catalyses the reaction a ribonucleoside 5'-phosphate + H2O = a ribonucleoside + phosphate. Its function is as follows. Nucleotidase that shows phosphatase activity on nucleoside 5'-monophosphates. The chain is 5'-nucleotidase SurE from Desulforamulus reducens (strain ATCC BAA-1160 / DSM 100696 / MI-1) (Desulfotomaculum reducens).